The sequence spans 145 residues: uncharacterized protein (145 aa).

It belongs to the methyltransferase superfamily.

In terms of biological role, probable methyltransferase. This is an uncharacterized protein from Schizosaccharomyces pombe (strain 972 / ATCC 24843) (Fission yeast).